Consider the following 275-residue polypeptide: MPVKKYKPTSPGRRNMSVSTFEEITKKEPERSLLEPLRKKAGRNNYGRITVRHRGGGHKRHYRRIDFKRDKIGVPAKVAAIEYDPNRSARIALLHYVDGEKRYILAPLGLNVGDTVMSGPDADIRVGNALPLRQIPLGTQVHNVELEKGRGGVMVRSAGAAAQLMAKEGNYATLRMPSGEVRRVFIECMATIGQVGNLDHQNIRLGKAGRKRWLGRRPEVRGAAMNPRDHPHGGGEGRAPRGMPTPKTKWGKPARGVKTRHNPRTDPFIIRRRTR.

The disordered stretch occupies residues 220–275; sequence VRGAAMNPRDHPHGGGEGRAPRGMPTPKTKWGKPARGVKTRHNPRTDPFIIRRRTR. Over residues 227–239 the composition is skewed to basic and acidic residues; it reads PRDHPHGGGEGRA. Positions 249–262 are enriched in basic residues; sequence KWGKPARGVKTRHN.

It belongs to the universal ribosomal protein uL2 family. As to quaternary structure, part of the 50S ribosomal subunit. Forms a bridge to the 30S subunit in the 70S ribosome.

Its function is as follows. One of the primary rRNA binding proteins. Required for association of the 30S and 50S subunits to form the 70S ribosome, for tRNA binding and peptide bond formation. It has been suggested to have peptidyltransferase activity; this is somewhat controversial. Makes several contacts with the 16S rRNA in the 70S ribosome. The polypeptide is Large ribosomal subunit protein uL2 (Roseiflexus sp. (strain RS-1)).